The chain runs to 187 residues: Elongation factor P (187 aa).

It belongs to the elongation factor P family.

Its subcellular location is the cytoplasm. Its pathway is protein biosynthesis; polypeptide chain elongation. Its function is as follows. Involved in peptide bond synthesis. Stimulates efficient translation and peptide-bond synthesis on native or reconstituted 70S ribosomes in vitro. Probably functions indirectly by altering the affinity of the ribosome for aminoacyl-tRNA, thus increasing their reactivity as acceptors for peptidyl transferase. This is Elongation factor P from Corynebacterium urealyticum (strain ATCC 43042 / DSM 7109).